The chain runs to 120 residues: cAMP-responsive element-binding protein-like 2 (120 aa).

The tract at residues 1–24 (MDDSKVVGGKVKKPGKRGRKPAKI) is disordered. Basic residues predominate over residues 10 to 21 (KVKKPGKRGRKP). The bZIP domain occupies 23-86 (KIDLKAKLER…MAMDQGKIPS (64 aa)). Positions 29-60 (KLERSRQSARECRARKKLRYQYLEELVSSRER) are basic motif. The segment at 62–69 (ICALREEL) is leucine-zipper. The disordered stretch occupies residues 93–120 (TGEEQSKSQQNSSRHMKAGKTDANSNSW).

It belongs to the bZIP family. ATF subfamily. As to quaternary structure, interacts with CREB1; regulates CREB1 phosphorylation, stability and transcriptional activity. Interacts with immediate-early (IE) protein BICP22 of bovine herpesvirus-1 (BHV-1). Post-translationally, phosphorylated by AMPK.

It is found in the nucleus. In terms of biological role, probable regulator of CREB1 transcriptional activity which is involved in adipose cells differentiation. May also play a regulatory role in the cell cycle. This chain is cAMP-responsive element-binding protein-like 2 (CREBL2), found in Bos taurus (Bovine).